A 251-amino-acid chain; its full sequence is Imidazole glycerol phosphate synthase subunit HisF (251 aa).

Active-site residues include Asp-11 and Asp-130.

It belongs to the HisA/HisF family. Heterodimer of HisH and HisF.

The protein resides in the cytoplasm. The catalysed reaction is 5-[(5-phospho-1-deoxy-D-ribulos-1-ylimino)methylamino]-1-(5-phospho-beta-D-ribosyl)imidazole-4-carboxamide + L-glutamine = D-erythro-1-(imidazol-4-yl)glycerol 3-phosphate + 5-amino-1-(5-phospho-beta-D-ribosyl)imidazole-4-carboxamide + L-glutamate + H(+). Its pathway is amino-acid biosynthesis; L-histidine biosynthesis; L-histidine from 5-phospho-alpha-D-ribose 1-diphosphate: step 5/9. Functionally, IGPS catalyzes the conversion of PRFAR and glutamine to IGP, AICAR and glutamate. The HisF subunit catalyzes the cyclization activity that produces IGP and AICAR from PRFAR using the ammonia provided by the HisH subunit. This Metallosphaera sedula (strain ATCC 51363 / DSM 5348 / JCM 9185 / NBRC 15509 / TH2) protein is Imidazole glycerol phosphate synthase subunit HisF.